The sequence spans 242 residues: Type III pantothenate kinase (242 aa).

7-14 (DLGNSRFK) is an ATP binding site. Substrate-binding positions include Tyr91 and 98–101 (GVDR). Asp100 functions as the Proton acceptor in the catalytic mechanism. An ATP-binding site is contributed by Thr121. Position 171 (Thr171) interacts with substrate.

This sequence belongs to the type III pantothenate kinase family. In terms of assembly, homodimer. NH4(+) is required as a cofactor. The cofactor is K(+).

The protein resides in the cytoplasm. The catalysed reaction is (R)-pantothenate + ATP = (R)-4'-phosphopantothenate + ADP + H(+). Its pathway is cofactor biosynthesis; coenzyme A biosynthesis; CoA from (R)-pantothenate: step 1/5. Functionally, catalyzes the phosphorylation of pantothenate (Pan), the first step in CoA biosynthesis. This chain is Type III pantothenate kinase, found in Xylella fastidiosa (strain M23).